A 450-amino-acid polypeptide reads, in one-letter code: 6-phospho-beta-glucosidase (450 aa).

Position 5 to 73 (leucine 5 to aspartate 73) interacts with NAD(+). Positions 96 and 150 each coordinate substrate. Mn(2+)-binding residues include cysteine 172 and histidine 203. The Proton acceptor role is filled by tyrosine 258.

As to quaternary structure, homotetramer. NAD(+) serves as cofactor. It depends on Mn(2+) as a cofactor. The cofactor is Co(2+). Requires Ni(2+) as cofactor.

The catalysed reaction is 6-phospho-beta-D-glucosyl-(1-&gt;4)-D-glucose + H2O = D-glucose 6-phosphate + D-glucose. Hydrolyzes a wide variety of P-beta-glucosides including cellobiose-6P, salicin-6P, arbutin-6P, gentiobiose-6P, methyl-beta-glucoside-6P and p-nitrophenyl-beta-D-glucopyranoside-6P. Is also able to hydrolyze phospho-N,N'-diacetylchitobiose. The polypeptide is 6-phospho-beta-glucosidase (chbF) (Escherichia coli (strain K12)).